The chain runs to 136 residues: Protein Tat (136 aa).

A cysteine-rich region spans residues 22–37; sequence CTNCYCKKCCFHCPVC. Residues 38-48 form a core region; it reads FTKKALGISYG. Positions 48 to 57 are enriched in basic residues; it reads GRKRRGRKSA. The interval 48 to 136 is disordered; sequence GRKRRGRKSA…SGSSGSACKH (89 aa). A Nuclear localization signal, and RNA-binding (TAR) motif is present at residues 49–55; the sequence is RKRRGRK. Positions 58-73 are enriched in polar residues; the sequence is VHSTNNQDPVRQQSLP. Positions 104–120 are enriched in low complexity; that stretch reads SSVSSGRTSGTSSSGYT. Positions 123-136 are enriched in polar residues; the sequence is FKTSSGSSGSACKH.

The protein belongs to the lentiviruses Tat family. As to quaternary structure, interacts with host CCNT1. Associates with the P-TEFb complex composed at least of Tat, P-TEFb (CDK9 and CCNT1), TAR RNA, RNA Pol II. Interacts with CCNT2; the resulting complex is unable to bind to TAR RNA.

It is found in the host nucleus. The protein resides in the host nucleolus. Functionally, transcriptional activator that increases RNA Pol II processivity, thereby increasing the level of full-length viral transcripts. Recognizes a hairpin structure at the 5'-LTR of the nascent viral mRNAs referred to as the transactivation responsive RNA element (TAR) and recruits the cyclin T1-CDK9 complex (P-TEFb complex) that will in turn hyperphosphorylate the RNA polymerase II to allow efficient elongation. The CDK9 component of P-TEFb and other Tat-activated kinases hyperphosphorylate the C-terminus of RNA Pol II that becomes stabilized and much more processive. Extracellular circulating Tat can be endocytosed by surrounding uninfected cells via the binding to several surface receptors. Endosomal low pH allows Tat to cross the endosome membrane to enter the cytosol and eventually further translocate into the nucleus, thereby inducing severe cell dysfunctions ranging from cell activation to cell death. Through. The polypeptide is Protein Tat (Simian immunodeficiency virus (isolate TAN1) (SIV-cpz)).